Consider the following 257-residue polypeptide: Acyl-[acyl-carrier-protein]--UDP-N-acetylglucosamine O-acyltransferase (257 aa).

This sequence belongs to the transferase hexapeptide repeat family. LpxA subfamily. As to quaternary structure, homotrimer.

Its subcellular location is the cytoplasm. It carries out the reaction a (3R)-hydroxyacyl-[ACP] + UDP-N-acetyl-alpha-D-glucosamine = a UDP-3-O-[(3R)-3-hydroxyacyl]-N-acetyl-alpha-D-glucosamine + holo-[ACP]. It functions in the pathway glycolipid biosynthesis; lipid IV(A) biosynthesis; lipid IV(A) from (3R)-3-hydroxytetradecanoyl-[acyl-carrier-protein] and UDP-N-acetyl-alpha-D-glucosamine: step 1/6. In terms of biological role, involved in the biosynthesis of lipid A, a phosphorylated glycolipid that anchors the lipopolysaccharide to the outer membrane of the cell. The protein is Acyl-[acyl-carrier-protein]--UDP-N-acetylglucosamine O-acyltransferase of Fusobacterium nucleatum subsp. nucleatum (strain ATCC 25586 / DSM 15643 / BCRC 10681 / CIP 101130 / JCM 8532 / KCTC 2640 / LMG 13131 / VPI 4355).